Consider the following 559-residue polypeptide: Chromatin assembly factor 1 subunit B (559 aa).

7 WD repeats span residues 11–54 (HNKE…DGKA), 64–103 (RHTK…EPEQ), 127–166 (GHLE…KISI), 169–208 (EHKS…VAFN), 228–279 (FHDD…RPIA), 299–340 (ELRP…PFGY), and 344–385 (IHYH…IPLK). The interval 386–559 (EKPVLNMRTP…NKGGTESLDP (174 aa)) is disordered. T394 carries the post-translational modification Phosphothreonine. S409 is modified (phosphoserine). T419 bears the Phosphothreonine mark. S429 is subject to Phosphoserine. Residues 430-444 (PGTTPPQARQAPAPT) show a composition bias toward low complexity. The residue at position 433 (T433) is a Phosphothreonine. Residue S458 is modified to Phosphoserine. Over residues 469 to 495 (LQPSSQNTKAHPSRRVTLNTLQAWSKT) the composition is skewed to polar residues. K494 carries the post-translational modification N6-acetyllysine. A phosphothreonine mark is found at T495, T509, T521, and T531. Residues 509 to 526 (TPPSSVPTSVISTPSTEE) are compositionally biased toward low complexity. S538 is subject to Phosphoserine. The segment covering 541–552 (ELKRPRLDENKG) has biased composition (basic and acidic residues).

The protein belongs to the WD repeat HIR1 family. In terms of assembly, subunit of the CAF-1 complex that contains RBBP4, CHAF1B and CHAF1A. CHAF1A binds directly to CHAF1B. Only minor amounts of RBBP4 are complexed with CHAF1A and CHAF1B in G1 phase. In G2 and S phase also monomeric CHAF1B is detected. Interacts with histones H3.1, H3.2 and H3.1t. Differentially phosphorylated during cell cycle. During mitosis the p60 subunit of inactive CAF-1 is hyperphosphorylated and displaced into the cytosol. Progressivly dephosphorylated from G1 to S and G2 phase. Phosphorylated p60 is recruited to chromatin undergoing DNA repair after UV irradiation in G1, S or G2 phases.

Its subcellular location is the nucleus. It localises to the cytoplasm. In terms of biological role, acts as a component of the histone chaperone complex chromatin assembly factor 1 (CAF-1), which assembles histone octamers onto DNA during replication and repair. CAF-1 performs the first step of the nucleosome assembly process, bringing newly synthesized histones H3 and H4 to replicating DNA; histones H2A/H2B can bind to this chromatin precursor subsequent to DNA replication to complete the histone octamer. The chain is Chromatin assembly factor 1 subunit B from Homo sapiens (Human).